A 1032-amino-acid polypeptide reads, in one-letter code: Exo-beta-D-glucosaminidase (1032 aa).

Positions 1-32 (MSFRQKRTRIPLLAMTVTALAAAVCGVTTAPA) are cleaved as a signal peptide. The propeptide occupies 33–46 (ATGAEVAVPLSVGA). Asp469 serves as the catalytic Proton donor. Glu541 serves as the catalytic Nucleophile. Positions 883–908 (SVRISGWNTGTQTVPADGSGPGPSDP) are disordered. The region spanning 909–1032 (VDYQAEDATI…GGPNVDKITL (124 aa)) is the CBM6 domain.

Belongs to the glycosyl hydrolase 2 family. In terms of assembly, monomer.

The protein resides in the secreted. The catalysed reaction is Hydrolysis of chitosan or chitosan oligosaccharides to remove successive D-glucosamine residues from the non-reducing termini.. Hydrolyzes chitosan and chitooligosaccharides with retention of anomeric configuration. Has maximum activity on chitotetraose, chitopentaose and their corresponding alcohols, with a slight decrease in the rate of hydrolysis on longer chains. Has no activity against beta-D-glucopyranoside, beta-D-xylopyranoside, beta-D-mannoside, beta-D-glucuronide, beta-D-galactoside, beta-D-N-acetylgalactosamide, beta-D-N-acetylglucosaminide and alpha-D-N-acetylglucosaminide. In Amycolatopsis orientalis (Nocardia orientalis), this protein is Exo-beta-D-glucosaminidase.